Consider the following 529-residue polypeptide: GMP synthase [glutamine-hydrolyzing] (529 aa).

The Glutamine amidotransferase type-1 domain maps to 17 to 206 (TILVLDFGSQ…AIDICQASNN (190 aa)). C93 (nucleophile) is an active-site residue. Active-site residues include H180 and E182. In terms of domain architecture, GMPS ATP-PPase spans 207–404 (WTMENFIDTE…MGVPHDLVWR (198 aa)). 235–241 (SGGVDST) is a binding site for ATP. XMP is bound by residues R308, D466, K521, and E527.

In terms of assembly, homodimer. Mg(2+) is required as a cofactor.

The protein resides in the cytoplasm. The protein localises to the cytosol. It carries out the reaction XMP + L-glutamine + ATP + H2O = GMP + L-glutamate + AMP + diphosphate + 2 H(+). Its pathway is purine metabolism; GMP biosynthesis; GMP from XMP (L-Gln route): step 1/1. Functionally, catalyzes the conversion of xanthine monophosphate (XMP) to GMP in the presence of glutamine and ATP through an adenyl-XMP intermediate. The polypeptide is GMP synthase [glutamine-hydrolyzing] (GUA1) (Debaryomyces hansenii (strain ATCC 36239 / CBS 767 / BCRC 21394 / JCM 1990 / NBRC 0083 / IGC 2968) (Yeast)).